Reading from the N-terminus, the 1642-residue chain is Coiled-coil domain-containing protein 7A (1642 aa).

Residues Pro-21–Leu-51 form a disordered region. The LRR 1 repeat unit spans residues Val-161–Ala-184. Residues Leu-279–Glu-330 adopt a coiled-coil conformation. One copy of the LRR 2 repeat lies at Ile-1310–Thr-1333.

As to expression, exclusively expressed in the testes.

In Mus musculus (Mouse), this protein is Coiled-coil domain-containing protein 7A.